The sequence spans 256 residues: Omega-amidase YafV (256 aa).

The 231-residue stretch at 4–234 folds into the CN hydrolase domain; sequence LKLTLLQQPL…AAQLDAELSL (231 aa). Glu-42 acts as the Proton acceptor in catalysis. Lys-107 is an active-site residue. Residue Cys-141 is the Nucleophile of the active site.

Belongs to the carbon-nitrogen hydrolase superfamily. NIT1/NIT2 family.

It carries out the reaction a monoamide of a dicarboxylate + H2O = a dicarboxylate + NH4(+). Its function is as follows. Hydrolyzes alpha-ketoglutaramate (a-KGM) to alpha-ketoglutarate (alpha-KG) and ammonia (specific activity 21 umol/min/mg), has very weak activity on L-glutamine, and no activity on deaminated glutathione (dGSH) or glutathione. May function as a metabolite repair enzyme. This is Omega-amidase YafV from Yersinia enterocolitica.